Reading from the N-terminus, the 1441-residue chain is Envelopment polyprotein (1441 aa).

The N-terminal stretch at 1–13 (MIRMLVLIVVTAA) is a signal peptide. Residues 14-200 (SPVYQRCFQD…GSIANSICQN (187 aa)) lie on the Lumenal side of the membrane. N-linked (GlcNAc...) asparagine; by host glycosylation is present at N57. A helical transmembrane segment spans residues 201 to 221 (IEIIILVTLTLLIFILLSILS). The Cytoplasmic segment spans residues 222–305 (KTYICYLLMP…RAARVMCKSK (84 aa)). The helical transmembrane segment at 306–326 (GPASILSIITAVLVLTFVTPI) threads the bilayer. The Lumenal portion of the chain corresponds to 327–365 (NSMVLGESKETFELEELPDDMLEMALRINSYYFTCILNY). A helical membrane pass occupies residues 366–386 (AVSWGLIIAGLLVGLIFKKYQ). The Cytoplasmic portion of the chain corresponds to 387 to 452 (HRFLNIYAMY…LVQYKAKWMM (66 aa)). The chain crosses the membrane as a helical span at residues 453–473 (NFLIIYIFLILIKDSAIVGQA). Over 474 to 1395 (TGTDFTTCLE…EPFKNLFGSY (922 aa)) the chain is Lumenal. N-linked (GlcNAc...) asparagine; by host glycans are attached at residues N490 and N1177. A helical transmembrane segment spans residues 1396 to 1416 (IGIFYTFIISIIALLVIIYVL). Topologically, residues 1417–1441 (LPICFKLRDTLRKHDDAYKREMKIR) are cytoplasmic.

The protein belongs to the orthobunyavirus envelope glycoprotein family. In terms of assembly, glycoprotein C and Glycoprotein N interact with each other. Specific enzymatic cleavages in vivo yield mature proteins including nonstructural protein NSm, glycoprotein C, and glycoprotein N.

The protein localises to the virion membrane. Its subcellular location is the host Golgi apparatus membrane. It is found in the host endoplasmic reticulum membrane. Its function is as follows. Glycoprotein C and Glycoprotein N interact with each other and are present at the surface of the virion. They are able to attach the virion to a cell receptor and to promote fusion of membranes after endocytosis of the virion. The chain is Envelopment polyprotein (GP) from Bunyavirus La Crosse.